Here is a 155-residue protein sequence, read N- to C-terminus: Xanthine-guanine phosphoribosyltransferase (155 aa).

Residues 37-38, arginine 69, and 90-98 contribute to the 5-phospho-alpha-D-ribose 1-diphosphate site; these read RG and DDLVDTGGT. Residue arginine 69 participates in GMP binding. Mg(2+) is bound at residue aspartate 91. 2 residues coordinate guanine: aspartate 94 and isoleucine 137. Residues aspartate 94 and isoleucine 137 each coordinate xanthine. Residues 94 to 98 and 136 to 137 each bind GMP; these read DTGGT and WI.

It belongs to the purine/pyrimidine phosphoribosyltransferase family. XGPT subfamily. In terms of assembly, homotetramer. It depends on Mg(2+) as a cofactor.

It is found in the cell inner membrane. It carries out the reaction GMP + diphosphate = guanine + 5-phospho-alpha-D-ribose 1-diphosphate. The enzyme catalyses XMP + diphosphate = xanthine + 5-phospho-alpha-D-ribose 1-diphosphate. It catalyses the reaction IMP + diphosphate = hypoxanthine + 5-phospho-alpha-D-ribose 1-diphosphate. It participates in purine metabolism; GMP biosynthesis via salvage pathway; GMP from guanine: step 1/1. It functions in the pathway purine metabolism; XMP biosynthesis via salvage pathway; XMP from xanthine: step 1/1. Functionally, purine salvage pathway enzyme that catalyzes the transfer of the ribosyl-5-phosphate group from 5-phospho-alpha-D-ribose 1-diphosphate (PRPP) to the N9 position of the 6-oxopurines guanine and xanthine to form the corresponding ribonucleotides GMP (guanosine 5'-monophosphate) and XMP (xanthosine 5'-monophosphate), with the release of PPi. To a lesser extent, also acts on hypoxanthine. This chain is Xanthine-guanine phosphoribosyltransferase, found in Aeromonas salmonicida (strain A449).